Consider the following 117-residue polypeptide: Large ribosomal subunit protein uL22 (117 aa).

It belongs to the universal ribosomal protein uL22 family. In terms of assembly, part of the 50S ribosomal subunit.

This protein binds specifically to 23S rRNA; its binding is stimulated by other ribosomal proteins, e.g. L4, L17, and L20. It is important during the early stages of 50S assembly. It makes multiple contacts with different domains of the 23S rRNA in the assembled 50S subunit and ribosome. Its function is as follows. The globular domain of the protein is located near the polypeptide exit tunnel on the outside of the subunit, while an extended beta-hairpin is found that lines the wall of the exit tunnel in the center of the 70S ribosome. The protein is Large ribosomal subunit protein uL22 of Synechococcus elongatus (strain ATCC 33912 / PCC 7942 / FACHB-805) (Anacystis nidulans R2).